The chain runs to 459 residues: NADH-ubiquinone oxidoreductase chain 4 (459 aa).

The next 13 membrane-spanning stretches (helical) occupy residues 22–42, 61–81, 94–113, 114–134, 146–166, 197–217, 225–245, 258–278, 285–304, 308–330, 352–372, 380–400, and 437–457; these read HLSYTTLLFSFTIALLSLQWL, PISTPLLILTSWMTPLMILVS, RTFTTTIISLQISLTLAFSA, LEMMLFFTMFEATLIPTLIII, AGTYFLFYTLIGSLPLLIALT, WFALLMAFMIKMPLYGLHLWL, PIAGSMILAGVLLKLGGYGII, LSYPFMTLSLWGIIMTGLICL, SLIAYSSVGLMGLVISAALL, LSITGAIILMIAHGLSSSMLFCL, LLPLMTIWWLLASLMNMALPP, LTIIASLFSWANITIILTGLG, and LIMMLHMVPLILLMMKPQLMT.

Belongs to the complex I subunit 4 family.

The protein localises to the mitochondrion membrane. The catalysed reaction is a ubiquinone + NADH + 5 H(+)(in) = a ubiquinol + NAD(+) + 4 H(+)(out). Functionally, core subunit of the mitochondrial membrane respiratory chain NADH dehydrogenase (Complex I) that is believed to belong to the minimal assembly required for catalysis. Complex I functions in the transfer of electrons from NADH to the respiratory chain. The immediate electron acceptor for the enzyme is believed to be ubiquinone. In Pelomedusa subrufa (African side-necked turtle), this protein is NADH-ubiquinone oxidoreductase chain 4 (MT-ND4).